The sequence spans 732 residues: Beta-galactosidase 5 (732 aa).

Residues 1-23 (MGTTILVLSKILTFLLTTMLIGS) form the signal peptide. Glu187 acts as the Proton donor in catalysis. Glu256 serves as the catalytic Nucleophile. An N-linked (GlcNAc...) asparagine glycan is attached at Asn466.

It belongs to the glycosyl hydrolase 35 family. In terms of tissue distribution, expressed in leaves and flowers.

The protein localises to the secreted. The protein resides in the extracellular space. It is found in the apoplast. It catalyses the reaction Hydrolysis of terminal non-reducing beta-D-galactose residues in beta-D-galactosides.. The chain is Beta-galactosidase 5 (BGAL5) from Arabidopsis thaliana (Mouse-ear cress).